The primary structure comprises 280 residues: 2-dehydro-3-deoxyphosphooctonate aldolase (280 aa).

This sequence belongs to the KdsA family.

The protein localises to the cytoplasm. It catalyses the reaction D-arabinose 5-phosphate + phosphoenolpyruvate + H2O = 3-deoxy-alpha-D-manno-2-octulosonate-8-phosphate + phosphate. The protein operates within carbohydrate biosynthesis; 3-deoxy-D-manno-octulosonate biosynthesis; 3-deoxy-D-manno-octulosonate from D-ribulose 5-phosphate: step 2/3. It functions in the pathway bacterial outer membrane biogenesis; lipopolysaccharide biosynthesis. This is 2-dehydro-3-deoxyphosphooctonate aldolase from Neisseria gonorrhoeae (strain NCCP11945).